The sequence spans 189 residues: uncharacterized protein (189 aa).

The protein belongs to the isochorismatase family.

This is an uncharacterized protein from Bacillus subtilis (strain 168).